Consider the following 377-residue polypeptide: Chaperone protein DnaJ (377 aa).

Residues Asp-5–Gly-70 form the J domain. A CR-type zinc finger spans residues Gly-133–Ser-211. Residues Cys-146, Cys-149, Cys-163, Cys-166, Cys-185, Cys-188, Cys-199, and Cys-202 each contribute to the Zn(2+) site. CXXCXGXG motif repeat units lie at residues Cys-146–Gly-153, Cys-163–Gly-170, Cys-185–Gly-192, and Cys-199–Gly-206.

The protein belongs to the DnaJ family. As to quaternary structure, homodimer. The cofactor is Zn(2+).

Its subcellular location is the cytoplasm. In terms of biological role, participates actively in the response to hyperosmotic and heat shock by preventing the aggregation of stress-denatured proteins and by disaggregating proteins, also in an autonomous, DnaK-independent fashion. Unfolded proteins bind initially to DnaJ; upon interaction with the DnaJ-bound protein, DnaK hydrolyzes its bound ATP, resulting in the formation of a stable complex. GrpE releases ADP from DnaK; ATP binding to DnaK triggers the release of the substrate protein, thus completing the reaction cycle. Several rounds of ATP-dependent interactions between DnaJ, DnaK and GrpE are required for fully efficient folding. Also involved, together with DnaK and GrpE, in the DNA replication of plasmids through activation of initiation proteins. The sequence is that of Chaperone protein DnaJ from Shewanella baltica (strain OS223).